A 376-amino-acid chain; its full sequence is Chaperone protein DnaJ (376 aa).

The J domain maps to 5 to 70 (DYYEILGVSK…QKRAAYDQYG (66 aa)). A CR-type zinc finger spans residues 131–209 (GVTKEIRIPT…CHGHGRVERS (79 aa)). Zn(2+) contacts are provided by cysteine 144, cysteine 147, cysteine 161, cysteine 164, cysteine 183, cysteine 186, cysteine 197, and cysteine 200. CXXCXGXG motif repeat units lie at residues 144–151 (CDVCHGSG), 161–168 (CPTCHGSG), 183–190 (CPHCQGRG), and 197–204 (CNKCHGHG).

The protein belongs to the DnaJ family. In terms of assembly, homodimer. The cofactor is Zn(2+).

The protein localises to the cytoplasm. Participates actively in the response to hyperosmotic and heat shock by preventing the aggregation of stress-denatured proteins and by disaggregating proteins, also in an autonomous, DnaK-independent fashion. Unfolded proteins bind initially to DnaJ; upon interaction with the DnaJ-bound protein, DnaK hydrolyzes its bound ATP, resulting in the formation of a stable complex. GrpE releases ADP from DnaK; ATP binding to DnaK triggers the release of the substrate protein, thus completing the reaction cycle. Several rounds of ATP-dependent interactions between DnaJ, DnaK and GrpE are required for fully efficient folding. Also involved, together with DnaK and GrpE, in the DNA replication of plasmids through activation of initiation proteins. The polypeptide is Chaperone protein DnaJ (Escherichia fergusonii (strain ATCC 35469 / DSM 13698 / CCUG 18766 / IAM 14443 / JCM 21226 / LMG 7866 / NBRC 102419 / NCTC 12128 / CDC 0568-73)).